A 945-amino-acid polypeptide reads, in one-letter code: Alanine--tRNA ligase (945 aa).

Residues His564, His568, Cys666, and His670 each contribute to the Zn(2+) site. The tract at residues 911-945 (SGGGRPDMAQAGGKDASKLPEALQQARETMTEKLG) is disordered.

This sequence belongs to the class-II aminoacyl-tRNA synthetase family. Requires Zn(2+) as cofactor.

It localises to the cytoplasm. It catalyses the reaction tRNA(Ala) + L-alanine + ATP = L-alanyl-tRNA(Ala) + AMP + diphosphate. In terms of biological role, catalyzes the attachment of alanine to tRNA(Ala) in a two-step reaction: alanine is first activated by ATP to form Ala-AMP and then transferred to the acceptor end of tRNA(Ala). Also edits incorrectly charged Ser-tRNA(Ala) and Gly-tRNA(Ala) via its editing domain. This is Alanine--tRNA ligase from Rhodopirellula baltica (strain DSM 10527 / NCIMB 13988 / SH1).